The following is a 296-amino-acid chain: Small ribosomal subunit protein uS2 (296 aa).

Residues 274 to 284 are compositionally biased toward low complexity; that stretch reads ASSAAPADTWA. A disordered region spans residues 274-296; the sequence is ASSAAPADTWAGESGNPDAGVKW.

Belongs to the universal ribosomal protein uS2 family. As to quaternary structure, component of the small ribosomal subunit. Mature ribosomes consist of a small (40S) and a large (60S) subunit. The 40S subunit contains about 33 different proteins and 1 molecule of RNA (18S). The 60S subunit contains about 49 different proteins and 3 molecules of RNA (25S, 5.8S and 5S). Interacts with RPS21.

It is found in the cytoplasm. In terms of biological role, required for the assembly and/or stability of the 40S ribosomal subunit. Required for the processing of the 20S rRNA-precursor to mature 18S rRNA in a late step of the maturation of 40S ribosomal subunits. This is Small ribosomal subunit protein uS2 from Ajellomyces capsulatus (strain G186AR / H82 / ATCC MYA-2454 / RMSCC 2432) (Darling's disease fungus).